The primary structure comprises 254 residues: MVTGIKKTVKVVVVGDGAVGKTSLLILYTTKAFPKDYVPTVFDNFNCLEMYDNKPVNLVLWDTAGQEDYDNLRPLSYPQTDVFIICYSVVKRDSLDNIKYKWLPEINQTNQGTPIILVGTKTDLREDKKTLSQLQESKQEPVSRDEGVALAKEIGAVQFFECSALTGNGVNDIFAAAIKAAFNKPAVTSPTSKSSGKSSPSSTSSKPSKTTTTTTTSSSSSSPPAASTAKPAGEKKLSWGLFRKKDKDEKKPAK.

15-22 lines the GTP pocket; the sequence is GDGAVGKT. The short motif at 37-45 is the Effector region element; it reads YVPTVFDNF. Residues 62-66 and 120-123 contribute to the GTP site; these read DTAGQ and TKTD. A compositionally biased stretch (low complexity) spans 186–231; it reads AVTSPTSKSSGKSSPSSTSSKPSKTTTTTTTSSSSSSPPAASTAKP. The segment at 186 to 254 is disordered; sequence AVTSPTSKSS…KDKDEKKPAK (69 aa). The span at 232-254 shows a compositional bias: basic and acidic residues; sequence AGEKKLSWGLFRKKDKDEKKPAK.

The protein belongs to the small GTPase superfamily. Rho family.

The sequence is that of Rho-related protein racD (racD) from Dictyostelium discoideum (Social amoeba).